The following is a 553-amino-acid chain: Membrane protein insertase YidC (553 aa).

The chain crosses the membrane as a helical span at residues 3-23 (IKRTILWVIFSLSVVLLFDNW). Residues 44–64 (AAAPGGTPAGDVPKAAAPAAA) form a disordered region. 4 consecutive transmembrane segments (helical) span residues 359 to 379 (LLGN…LVFF), 429 to 449 (LGGC…YWVL), 467 to 487 (LASP…MFVQ), and 507 to 527 (PIAF…YWVV).

Belongs to the OXA1/ALB3/YidC family. Type 1 subfamily. In terms of assembly, interacts with the Sec translocase complex via SecD. Specifically interacts with transmembrane segments of nascent integral membrane proteins during membrane integration.

The protein resides in the cell inner membrane. In terms of biological role, required for the insertion and/or proper folding and/or complex formation of integral membrane proteins into the membrane. Involved in integration of membrane proteins that insert both dependently and independently of the Sec translocase complex, as well as at least some lipoproteins. Aids folding of multispanning membrane proteins. This Ralstonia nicotianae (strain ATCC BAA-1114 / GMI1000) (Ralstonia solanacearum) protein is Membrane protein insertase YidC.